Consider the following 152-residue polypeptide: Transcriptional repressor NrdR (152 aa).

Residues 3 to 34 fold into a zinc finger; it reads CPYCSYNESKVVDSRSTEDSISIRRRRECLEC. Positions 49-139 constitute an ATP-cone domain; sequence ILVIKKNLNR…VYRQFKDINT (91 aa).

It belongs to the NrdR family. The cofactor is Zn(2+).

In terms of biological role, negatively regulates transcription of bacterial ribonucleotide reductase nrd genes and operons by binding to NrdR-boxes. The chain is Transcriptional repressor NrdR from Clostridium tetani (strain Massachusetts / E88).